Here is a 432-residue protein sequence, read N- to C-terminus: EF-hand calcium-binding domain-containing protein 3 (432 aa).

EF-hand domains lie at 45–80 (AQLEAFRNAYNFFTKDRTGCIDSHGLISTIAKLGMN) and 81–116 (LNTYDIYNELKCADLDRDGKINFSDFINVLTDKKLF). Ca(2+)-binding residues include aspartate 94, aspartate 96, aspartate 98, lysine 100, and aspartate 105. Residue tyrosine 273 is modified to Phosphotyrosine. A disordered region spans residues 394 to 432 (SMNKSSPSNSGLSSPSDFSESDPETGRKRKRKSSRGFRQ). Low complexity predominate over residues 395–411 (MNKSSPSNSGLSSPSDF). A compositionally biased stretch (basic residues) spans 420–432 (RKRKRKSSRGFRQ).

This chain is EF-hand calcium-binding domain-containing protein 3 (Efcab3), found in Mus musculus (Mouse).